Consider the following 267-residue polypeptide: MSGAGNREQVFPTRMTLGVMKSKLKGAQQGHSLLKRKSEALTKRFRDITQRIDDAKRKMGRVMQTAAFSLAEVQYATGDNISYQVQESVQKARFTVKAKQENVSGVFLPTFDSHINEDVNDFKLTALARGGQQVQKAKLIYSKAVETLVELASLQTAFIILDEVIKITNRRVNAIEHVIIPRTENTIAYINGELDEMDREEFYRLKKVQEKKQEAAAAAEQEEALAKAKAEGATDELAIQQDVEALDIKADKEEVDILQEKEDDVIF.

Belongs to the V-ATPase D subunit family. In terms of assembly, V-ATPase is a heteromultimeric enzyme composed of a peripheral catalytic V1 complex (components A to H) attached to an integral membrane V0 proton pore complex (components: a, c, c', c'', d, e, f and VOA1).

The protein localises to the vacuole membrane. Subunit of the V1 complex of vacuolar(H+)-ATPase (V-ATPase), a multisubunit enzyme composed of a peripheral complex (V1) that hydrolyzes ATP and a membrane integral complex (V0) that translocates protons. V-ATPase is responsible for acidifying and maintaining the pH of intracellular compartments. The polypeptide is V-type proton ATPase subunit D (VMA8) (Candida albicans (strain SC5314 / ATCC MYA-2876) (Yeast)).